Reading from the N-terminus, the 485-residue chain is Glutamyl-tRNA(Gln) amidotransferase subunit A (485 aa).

Catalysis depends on charge relay system residues K76 and S155. The active-site Acyl-ester intermediate is S179.

The protein belongs to the amidase family. GatA subfamily. Heterotrimer of A, B and C subunits.

It carries out the reaction L-glutamyl-tRNA(Gln) + L-glutamine + ATP + H2O = L-glutaminyl-tRNA(Gln) + L-glutamate + ADP + phosphate + H(+). Functionally, allows the formation of correctly charged Gln-tRNA(Gln) through the transamidation of misacylated Glu-tRNA(Gln) in organisms which lack glutaminyl-tRNA synthetase. The reaction takes place in the presence of glutamine and ATP through an activated gamma-phospho-Glu-tRNA(Gln). This Marinobacter nauticus (strain ATCC 700491 / DSM 11845 / VT8) (Marinobacter aquaeolei) protein is Glutamyl-tRNA(Gln) amidotransferase subunit A.